Consider the following 72-residue polypeptide: Penaeidin-2a (72 aa).

Residues 1 to 21 (MRLVVCLVFLASFALVCQGEA) form the signal peptide. 3 disulfides stabilise this stretch: C45-C59, C48-C66, and C60-C67. The residue at position 71 (K71) is a Lysine amide.

As to expression, higher expression in hemocytes and to a lesser extent in heart, testis, gills, intestine, lymphoid organ and hepatopancreas. Traces in eyes and subcuticular epithelium. Not present in the brain.

The protein localises to the cytoplasmic granule. In terms of biological role, antibacterial activity against M.luteus and E.coli bacteria. Antifungal activity against N.crassa and F.oxysporum. Presents chitin-binding activity. This chain is Penaeidin-2a, found in Penaeus vannamei (Whiteleg shrimp).